A 665-amino-acid polypeptide reads, in one-letter code: ATPase WRNIP1 (665 aa).

A UBZ4-type zinc finger spans residues 17-44; that stretch reads QVQCPVCQQMMPAAHINSHLDRCLLLHP. Zn(2+)-binding residues include Cys20, Cys23, His31, His35, and Cys39. The tract at residues 48–190 is disordered; that stretch reads AEPAAGSHRA…DGEDDPGHWD (143 aa). A phosphoserine mark is found at Ser65 and Ser75. Residues 76 to 89 show a composition bias toward polar residues; that stretch reads ESSALKQPATPTAA. Lys81 participates in a covalent cross-link: Glycyl lysine isopeptide (Lys-Gly) (interchain with G-Cter in ubiquitin). A Phosphothreonine modification is found at Thr85. Phosphoserine is present on residues Ser91 and Ser92. Acidic residues predominate over residues 92 to 104; that stretch reads SEGEGEEGDDGGE. A Phosphothreonine modification is found at Thr116. Low complexity predominate over residues 130–155; the sequence is RSSSPGRKGSGKRPAAAAAAGSASPR. Phosphoserine is present on Ser139. A Glycyl lysine isopeptide (Lys-Gly) (interchain with G-Cter in ubiquitin) cross-link involves residue Lys141. Ser153 is subject to Phosphoserine. A compositionally biased stretch (acidic residues) spans 159-184; sequence EAEAQEEEEAVGDGDGDGDADADGED. Lys225 is covalently cross-linked (Glycyl lysine isopeptide (Lys-Gly) (interchain with G-Cter in ubiquitin)). 270 to 276 is an ATP binding site; sequence PGCGKTT. Glycyl lysine isopeptide (Lys-Gly) (interchain with G-Cter in ubiquitin) cross-links involve residues Lys301, Lys310, Lys316, Lys322, and Lys335. Lys482 participates in a covalent cross-link: Glycyl lysine isopeptide (Lys-Gly) (interchain with G-Cter in SUMO2); alternate. Lys482 participates in a covalent cross-link: Glycyl lysine isopeptide (Lys-Gly) (interchain with G-Cter in ubiquitin); alternate. Tyr534 and Tyr562 each carry phosphotyrosine. Residue Lys627 forms a Glycyl lysine isopeptide (Lys-Gly) (interchain with G-Cter in ubiquitin) linkage. Residue Lys633 forms a Glycyl lysine isopeptide (Lys-Gly) (interchain with G-Cter in ubiquitin); alternate linkage. Residue Lys633 is modified to N6-acetyllysine; alternate. Residue Lys636 forms a Glycyl lysine isopeptide (Lys-Gly) (interchain with G-Cter in ubiquitin) linkage.

This sequence belongs to the AAA ATPase family. RarA/MGS1/WRNIP1 subfamily. In terms of assembly, forms homooligomers, possibly octamers. Directly interacts with POLD1, POLD2 and POLD4. Interacts with the N-terminal domain of WRN. Interacts (via UBZ4-type zinc finger) with monoubiquitin and polyubiquitin. Interacts with TRIM14 and PPP6C; these interactions positively regulate the RIGI signaling pathway. Sumoylated with SUMO1 and SUMO2/3. Ubiquitously expressed.

The protein localises to the nucleus. Its subcellular location is the cytoplasm. It carries out the reaction ATP + H2O = ADP + phosphate + H(+). Functions as a modulator of initiation or reinitiation events during DNA polymerase delta-mediated DNA synthesis. In the presence of ATP, stimulation of DNA polymerase delta-mediated DNA synthesis is decreased. Also plays a role in the innate immune defense against viruses. Stabilizes the RIGI dsRNA interaction and promotes RIGI 'Lys-63'-linked polyubiquitination. In turn, RIGI transmits the signal through mitochondrial MAVS. This chain is ATPase WRNIP1, found in Homo sapiens (Human).